The following is a 91-amino-acid chain: Large ribosomal subunit protein bL27 (91 aa).

Residues 1-13 show a composition bias toward polar residues; that stretch reads MATKKSGGSSCNG. The segment at 1–20 is disordered; that stretch reads MATKKSGGSSCNGRDSRGRR.

The protein belongs to the bacterial ribosomal protein bL27 family.

The chain is Large ribosomal subunit protein bL27 from Anaplasma phagocytophilum (strain HZ).